The sequence spans 1371 residues: DNA-directed RNA polymerase subunit beta'' (1371 aa).

Positions 220, 293, 300, and 303 each coordinate Zn(2+).

This sequence belongs to the RNA polymerase beta' chain family. RpoC2 subfamily. In terms of assembly, in plastids the minimal PEP RNA polymerase catalytic core is composed of four subunits: alpha, beta, beta', and beta''. When a (nuclear-encoded) sigma factor is associated with the core the holoenzyme is formed, which can initiate transcription. Requires Zn(2+) as cofactor.

It is found in the plastid. Its subcellular location is the chloroplast. It carries out the reaction RNA(n) + a ribonucleoside 5'-triphosphate = RNA(n+1) + diphosphate. Its function is as follows. DNA-dependent RNA polymerase catalyzes the transcription of DNA into RNA using the four ribonucleoside triphosphates as substrates. The sequence is that of DNA-directed RNA polymerase subunit beta'' from Lobularia maritima (Sweet alyssum).